An 833-amino-acid polypeptide reads, in one-letter code: Prickle-like protein 1 (833 aa).

The interval 1–22 (MPLEMDQKISKHTFGCQRSSTS) is disordered. Residues 14–122 (FGCQRSSTSD…NIKMLSRAVM (109 aa)) form the PET domain. 3 LIM zinc-binding domains span residues 124-188 (AMCE…ELLK), 189-249 (PRCS…HYAE), and 250-313 (YCES…EDVH). 5 disordered regions span residues 312–346 (VHASDSSDSAFQSARSRESRRSVRMGKSSRSADQC), 432–456 (EDNRSNEHWMSDNIKGKNDLQRNSR), 603–702 (CQEK…ERNP), 767–786 (CSSSSSDSEEEGYFLGQPIP), and 805–833 (NALSSSQFSQRTTKSKKKKGHKGKNCIIS). 2 stretches are compositionally biased toward basic and acidic residues: residues 432 to 453 (EDNRSNEHWMSDNIKGKNDLQR) and 603 to 614 (CQEKPPPEEKPM). Residues 669-680 (RPHHHRRRKSRK) show a composition bias toward basic residues. A compositionally biased stretch (basic residues) spans 817–833 (TKSKKKKGHKGKNCIIS). Position 830 is a cysteine methyl ester (cysteine 830). Cysteine 830 is lipidated: S-farnesyl cysteine. Residues 831 to 833 (IIS) constitute a propeptide, removed in mature form.

It belongs to the prickle / espinas / testin family. In terms of assembly, interacts with dvl2/dsh and mapk8/jnk1.

It is found in the cell membrane. In terms of biological role, acts in a planar cell polarity (PCP) complex; polarization along the apical/basal axis of epithelial cells. Regulates the polarized assembly of fibronectrin on the surface of the mesoderm during gastrulation. Essential for gastrulation cell movements, cooperating with dvl2/dsh to activate jnk. Acts together with tes to control axial elongation. The chain is Prickle-like protein 1 from Xenopus tropicalis (Western clawed frog).